Consider the following 554-residue polypeptide: MAYYRTPHDVTALPAWQALKDHRQAMQDFSMREAFNADPQRFSQFTLSSCGLFLDYSKNLITSETRDLLVNLAKEVGLSDAIKSMITGELVNASEGRPALHTALRRPVGDKLSVNGVNVMPEVHKVLNQITELVGRIHDGLWRGYTEKPITDVVNIGIGGSFLGPELVSEALLSYAQKGVRCHYLANIDGSEFHELSAKIRAETTLFIVSSKSFNTLETLKNAQAARAWYLAQGGSEAELHRHFIAVSSNNAAAVAFGIREENIFPMWDWVGGRYSLWSAIGLPIALAIGMSNFKELLSGAYTMDQHFQSAPFEQNMPVLLALLGVWYGNFWGAQSHAILPYDHYLRNITKHLQQLDMESNGKSVRQDGTPVATDTGPVIWGGVGCNGQHAYHQLLHQGTQLIPADFIVPIVSFNPVADHHQWLYANCLSQSQALMLGKTRAEAESELREKGLSEAEIAKLAPHKVIPGNRPSNTLVVERISPRRLGALVALYEHKVFVQSVVWGINAFDQWGVELGKELGKGVYNRLVGSDETLADDASTQGLINYFRGRHRG.

Glutamate 359 serves as the catalytic Proton donor. Catalysis depends on residues histidine 390 and lysine 518.

Belongs to the GPI family.

Its subcellular location is the cytoplasm. It carries out the reaction alpha-D-glucose 6-phosphate = beta-D-fructose 6-phosphate. Its pathway is carbohydrate biosynthesis; gluconeogenesis. It participates in carbohydrate degradation; glycolysis; D-glyceraldehyde 3-phosphate and glycerone phosphate from D-glucose: step 2/4. In terms of biological role, catalyzes the reversible isomerization of glucose-6-phosphate to fructose-6-phosphate. This Pseudomonas fluorescens (strain ATCC BAA-477 / NRRL B-23932 / Pf-5) protein is Glucose-6-phosphate isomerase.